The chain runs to 212 residues: ATP-dependent dethiobiotin synthetase BioD (212 aa).

13 to 18 (GIGKTV) serves as a coordination point for ATP. A Mg(2+)-binding site is contributed by T17. Residue K33 is part of the active site. S37 contacts substrate. E100 contacts Mg(2+). ATP-binding positions include 100–103 (EGAG) and 184–186 (PRL).

The protein belongs to the dethiobiotin synthetase family. As to quaternary structure, homodimer. It depends on Mg(2+) as a cofactor.

It is found in the cytoplasm. It carries out the reaction (7R,8S)-7,8-diammoniononanoate + CO2 + ATP = (4R,5S)-dethiobiotin + ADP + phosphate + 3 H(+). It participates in cofactor biosynthesis; biotin biosynthesis; biotin from 7,8-diaminononanoate: step 1/2. In terms of biological role, catalyzes a mechanistically unusual reaction, the ATP-dependent insertion of CO2 between the N7 and N8 nitrogen atoms of 7,8-diaminopelargonic acid (DAPA, also called 7,8-diammoniononanoate) to form a ureido ring. The polypeptide is ATP-dependent dethiobiotin synthetase BioD (Brucella anthropi (strain ATCC 49188 / DSM 6882 / CCUG 24695 / JCM 21032 / LMG 3331 / NBRC 15819 / NCTC 12168 / Alc 37) (Ochrobactrum anthropi)).